We begin with the raw amino-acid sequence, 386 residues long: Glucose-1-phosphate adenylyltransferase (386 aa).

Alpha-D-glucose 1-phosphate is bound by residues Tyr-100, Gly-165, Glu-180–Lys-181, and Ser-191.

Belongs to the bacterial/plant glucose-1-phosphate adenylyltransferase family. Homotetramer.

The catalysed reaction is alpha-D-glucose 1-phosphate + ATP + H(+) = ADP-alpha-D-glucose + diphosphate. It functions in the pathway glycan biosynthesis; glycogen biosynthesis. Functionally, involved in the biosynthesis of ADP-glucose, a building block required for the elongation reactions to produce glycogen. Catalyzes the reaction between ATP and alpha-D-glucose 1-phosphate (G1P) to produce pyrophosphate and ADP-Glc. In Clostridium beijerinckii (strain ATCC 51743 / NCIMB 8052) (Clostridium acetobutylicum), this protein is Glucose-1-phosphate adenylyltransferase.